The chain runs to 496 residues: Glutamate--tRNA ligase (496 aa).

The 'HIGH' region signature appears at 10–20 (PSPTGPLHIGG). The 'KMSKS' region signature appears at 251-255 (KMSKR). Lysine 254 lines the ATP pocket.

Belongs to the class-I aminoacyl-tRNA synthetase family. Glutamate--tRNA ligase type 1 subfamily. Monomer.

The protein localises to the cytoplasm. It catalyses the reaction tRNA(Glu) + L-glutamate + ATP = L-glutamyl-tRNA(Glu) + AMP + diphosphate. Catalyzes the attachment of glutamate to tRNA(Glu) in a two-step reaction: glutamate is first activated by ATP to form Glu-AMP and then transferred to the acceptor end of tRNA(Glu). This Heliobacterium modesticaldum (strain ATCC 51547 / Ice1) protein is Glutamate--tRNA ligase.